We begin with the raw amino-acid sequence, 37 residues long: Large ribosomal subunit protein bL36c (37 aa).

It belongs to the bacterial ribosomal protein bL36 family.

The protein localises to the plastid. It is found in the chloroplast. The protein is Large ribosomal subunit protein bL36c (rpl36) of Pisum sativum (Garden pea).